Here is a 360-residue protein sequence, read N- to C-terminus: DNA polymerase IV (360 aa).

The 184-residue stretch at 8 to 191 folds into the UmuC domain; sequence VLHVDMDSFF…LPVGRIPGIG (184 aa). Positions 12 and 110 each coordinate Mg(2+). Glu-111 is an active-site residue.

Belongs to the DNA polymerase type-Y family. Monomer. It depends on Mg(2+) as a cofactor.

It is found in the cytoplasm. The enzyme catalyses DNA(n) + a 2'-deoxyribonucleoside 5'-triphosphate = DNA(n+1) + diphosphate. In terms of biological role, poorly processive, error-prone DNA polymerase involved in untargeted mutagenesis. Copies undamaged DNA at stalled replication forks, which arise in vivo from mismatched or misaligned primer ends. These misaligned primers can be extended by PolIV. Exhibits no 3'-5' exonuclease (proofreading) activity. May be involved in translesional synthesis. The protein is DNA polymerase IV of Methanoculleus marisnigri (strain ATCC 35101 / DSM 1498 / JR1).